We begin with the raw amino-acid sequence, 588 residues long: Protein cereblon (588 aa).

Disordered regions lie at residues 1 to 107 and 159 to 197; these read MDDE…DDSD and QERR…DIGF. Residues 41–50 show a composition bias toward polar residues; that stretch reads AWNNATQDEQ. Over residues 75–85 the composition is skewed to acidic residues; sequence MVEDVLQDDTA. Over residues 86–96 the composition is skewed to polar residues; it reads SEGSHPSSDMS. The segment covering 159 to 168 has biased composition (basic and acidic residues); that stretch reads QERRRSRTSE. A compositionally biased stretch (pro residues) spans 181-192; that stretch reads NDPPPQQPPRPP. A Lon N-terminal domain is found at 228–454; that stretch reads HMLIFLHQHI…LIKSTFKDES (227 aa). In terms of domain architecture, CULT spans 453–562; that stretch reads ESLFFCRYCN…LAGSSVRIGK (110 aa). 4 residues coordinate Zn(2+): cysteine 458, cysteine 461, cysteine 527, and cysteine 530.

It belongs to the CRBN family. As to quaternary structure, likely a component of a DCX (DDB1-CUL4-X-box) protein ligase complex. May interact with pic/DDB1. Post-translationally, ubiquitinated.

It localises to the nucleus. The protein operates within protein modification; protein ubiquitination. Its function is as follows. Substrate recognition component of a DCX (DDB1-CUL4-X-box) E3 protein ligase complex that mediates the ubiquitination and subsequent proteasomal degradation of target proteins. Has an essential role in mediating growth by negatively regulating insulin signaling. It also has a role in maintaining presynaptic function in the neuromuscular junction synapses of third-instar larvae. This chain is Protein cereblon, found in Drosophila yakuba (Fruit fly).